The primary structure comprises 707 residues: Polyribonucleotide nucleotidyltransferase (707 aa).

The Mg(2+) site is built by D487 and D493. A KH domain is found at 554 to 613 (PSMATIKIDPDKIRDVIGKGGATIRKICDDTGASIDLDDDGTVRIYAEDKTAAKAAIDTV). Residues 623–691 (GKLYRGTVAR…NRNRVKLSIK (69 aa)) form the S1 motif domain.

The protein belongs to the polyribonucleotide nucleotidyltransferase family. Component of the RNA degradosome, which is a multiprotein complex involved in RNA processing and mRNA degradation. Requires Mg(2+) as cofactor.

The protein localises to the cytoplasm. The enzyme catalyses RNA(n+1) + phosphate = RNA(n) + a ribonucleoside 5'-diphosphate. In terms of biological role, involved in mRNA degradation. Catalyzes the phosphorolysis of single-stranded polyribonucleotides processively in the 3'- to 5'-direction. This Chromohalobacter salexigens (strain ATCC BAA-138 / DSM 3043 / CIP 106854 / NCIMB 13768 / 1H11) protein is Polyribonucleotide nucleotidyltransferase.